The primary structure comprises 258 residues: Proteasome subunit alpha type-3 (258 aa).

Glycyl lysine isopeptide (Lys-Gly) (interchain with G-Cter in ubiquitin) cross-links involve residues Lys-100, Lys-199, and Lys-231.

The protein belongs to the peptidase T1A family. In terms of assembly, the 26S proteasome consists of a 20S proteasome core and two 19S regulatory subunits. The 20S proteasome core is composed of 28 subunits that are arranged in four stacked rings, resulting in a barrel-shaped structure. The two end rings are each formed by seven alpha subunits, and the two central rings are each formed by seven beta subunits. The catalytic chamber with the active sites is on the inside of the barrel.

It is found in the cytoplasm. The protein resides in the nucleus. In terms of biological role, the proteasome degrades poly-ubiquitinated proteins in the cytoplasm and in the nucleus. It is essential for the regulated turnover of proteins and for the removal of misfolded proteins. The proteasome is a multicatalytic proteinase complex that is characterized by its ability to cleave peptides with Arg, Phe, Tyr, Leu, and Glu adjacent to the leaving group at neutral or slightly basic pH. It has an ATP-dependent proteolytic activity. This Saccharomyces cerevisiae (strain ATCC 204508 / S288c) (Baker's yeast) protein is Proteasome subunit alpha type-3 (PRE9).